Here is a 473-residue protein sequence, read N- to C-terminus: Sphingosine kinase 1 (473 aa).

The DAGKc domain occupies 83–233 (QCRGNLLVFI…VALYSVKTDN (151 aa)). Residues 93 to 95 (NPN) and 125 to 129 (TTGPN) contribute to the ATP site. 151-154 (SGDG) is a substrate binding site. The Proton donor/acceptor role is filled by Asp-153. ATP contacts are provided by residues Glu-158 and 184-186 (GSG). A substrate-binding site is contributed by Asp-251. ATP is bound by residues Arg-258, Arg-265, and 448-450 (DGE).

Requires Mg(2+) as cofactor. In terms of tissue distribution, expressed in the majority of cholinergic and GABAergic neurons, body wall muscle, excretory canal cells, intestine, and hypodermis.

It localises to the presynaptic cell membrane. It is found in the cell projection. The protein localises to the axon. Its subcellular location is the perikaryon. The protein resides in the mitochondrion membrane. The enzyme catalyses a sphingoid base + ATP = a sphingoid 1-phosphate + ADP + H(+). The catalysed reaction is 15-methylhexadecasphing-4-enine + ATP = 15-methylhexadecasphing-4-enine 1-phosphate + ADP + H(+). It catalyses the reaction 15-methylhexadecasphinganine + ATP = 15-methylhexadecasphinganine 1-phosphate + ADP + H(+). It functions in the pathway lipid metabolism; sphingolipid metabolism. Functionally, catalyzes the phosphorylation of sphingoid bases to form sphingoid 1-phosphate (SPP), which have both intra- and extracellular functions. C.elegans contain specific sphingoid bases, which are unique or different in structure compared to the sphingoid bases found in other animals. Two examples of these distinctive compounds are: 15-methylhexadecasphinganine and 15-methylhexadecasphing-4-enine. Required for neurotransmitter release from neuromuscular junctions. Acts by recruiting the synaptic vesicle priming protein unc-13 to synapses. In Caenorhabditis elegans, this protein is Sphingosine kinase 1 (sphk-1).